Consider the following 521-residue polypeptide: Cytoplasmic polyadenylation element-binding protein 2 (521 aa).

Residues 1–11 (MNLPQQQPPAA) are compositionally biased toward pro residues. Disordered stretches follow at residues 1-35 (MNLP…QAAA) and 50-88 (PLLK…NMGI). Low complexity predominate over residues 12 to 35 (APQQPQSRRSPVSPQLQQQHQAAA). S21 bears the Phosphoserine mark. A compositionally biased stretch (polar residues) spans 55 to 70 (SPWSNHQNSGWGTASM). RRM domains are found at residues 264–355 (RKVF…PWNL) and 372–454 (KTIF…PYVL).

Belongs to the RRM CPEB family. As to quaternary structure, interacts with TENT2/GLD2. In terms of tissue distribution, expressed in embryo, cerebellum, salivary gland, thymus, heart, liver, lung, spleen, kidney, intestine, ovary and round spermatids. Weakly expressed in granular cells of dentate gyrus and the pyramidal cells of CA3 and CA1 of the hippocampus.

It is found in the cytoplasm. In terms of biological role, may play a role in translational regulation of stored mRNAs in transcriptionally inactive haploid spermatids. Binds to poly(U) RNA oligomers. Required for cell cycle progression, specifically for the transition from metaphase to anaphase. The polypeptide is Cytoplasmic polyadenylation element-binding protein 2 (Cpeb2) (Mus musculus (Mouse)).